The sequence spans 502 residues: Probable ADP-dependent glucokinase (502 aa).

The signal sequence occupies residues 1-32 (MFSETFVPSIFSYKHRLLHLSVLFFIVPYWYS). An ADPK domain is found at 44 to 497 (SVETAMFLSW…LLYSQFYRLN (454 aa)). N-linked (GlcNAc...) asparagine glycosylation is found at asparagine 89 and asparagine 190. Mg(2+) is bound by residues glutamate 290, glutamate 320, and aspartate 481. Catalysis depends on aspartate 481, which acts as the Proton acceptor.

Belongs to the ADP-dependent glucokinase family. Monomer. Mg(2+) is required as a cofactor.

The protein localises to the secreted. The catalysed reaction is D-glucose + ADP = D-glucose 6-phosphate + AMP + H(+). It functions in the pathway carbohydrate degradation; glycolysis. Its function is as follows. Catalyzes the phosphorylation of D-glucose to D-glucose 6-phosphate using ADP as the phosphate donor. GDP and CDP can replace ADP, but with reduced efficiency. This chain is Probable ADP-dependent glucokinase, found in Caenorhabditis elegans.